The chain runs to 457 residues: Carboxypeptidase N catalytic chain (457 aa).

The first 23 residues, 1-23, serve as a signal peptide directing secretion; that stretch reads MPDLPSAFLPLLLLSKFVTPVTF. Residues 24–338 enclose the Peptidase M14 domain; that stretch reads RHHRYDDLVR…EALIQFLEQV (315 aa). Cysteine 42 and cysteine 104 form a disulfide bridge. Residues histidine 86, glutamate 89, and histidine 216 each contribute to the Zn(2+) site. A disulfide bridge links cysteine 271 with cysteine 311. Residue glutamate 308 is the Proton donor/acceptor of the active site. O-linked (GalNAc...) threonine glycans are attached at residues threonine 400, threonine 402, and threonine 409. The tract at residues 418-457 is disordered; the sequence is SSSQVYPVQRAPGRGQGGRAKQPRTSRKKDPATKRHRGPA.

It belongs to the peptidase M14 family. Tetramer of two catalytic chains and two glycosylated inactive chains. Requires Zn(2+) as cofactor. As to expression, mainly expressed in liver. Also detected in lung, stomach, intestine, spleen and kidney.

The protein localises to the secreted. It is found in the extracellular space. The enzyme catalyses Release of a C-terminal basic amino acid, preferentially lysine.. Its function is as follows. Protects the body from potent vasoactive and inflammatory peptides containing C-terminal Arg or Lys (such as kinins or anaphylatoxins) which are released into the circulation. In Mus musculus (Mouse), this protein is Carboxypeptidase N catalytic chain (Cpn1).